The chain runs to 374 residues: Chaperone protein DnaJ (374 aa).

The region spanning 5 to 69 (DYYEVLGVSK…DKKAKYDQFG (65 aa)) is the J domain. The segment at 141-223 (GVNKKTILNL…CHGKGVESKR (83 aa)) adopts a CR-type zinc-finger fold. Zn(2+) contacts are provided by C154, C157, C171, C174, C197, C200, C211, and C214. 4 CXXCXGXG motif repeats span residues 154–161 (CTKCDGVG), 171–178 (CTKCNGAG), 197–204 (CDKCNGVG), and 211–218 (CKNCHGKG).

Belongs to the DnaJ family. In terms of assembly, homodimer. Requires Zn(2+) as cofactor.

It is found in the cytoplasm. Participates actively in the response to hyperosmotic and heat shock by preventing the aggregation of stress-denatured proteins and by disaggregating proteins, also in an autonomous, DnaK-independent fashion. Unfolded proteins bind initially to DnaJ; upon interaction with the DnaJ-bound protein, DnaK hydrolyzes its bound ATP, resulting in the formation of a stable complex. GrpE releases ADP from DnaK; ATP binding to DnaK triggers the release of the substrate protein, thus completing the reaction cycle. Several rounds of ATP-dependent interactions between DnaJ, DnaK and GrpE are required for fully efficient folding. Also involved, together with DnaK and GrpE, in the DNA replication of plasmids through activation of initiation proteins. This is Chaperone protein DnaJ from Mesoplasma florum (strain ATCC 33453 / NBRC 100688 / NCTC 11704 / L1) (Acholeplasma florum).